A 295-amino-acid polypeptide reads, in one-letter code: MNESESEIQARLLAQALPFMQRYENKTIVVKYGGHAMGNPELGKAFASDIALLKQSGVNPIVVHGGGPQIGAMLTKMGIESKFEGGLRVTDQKTVEIVEMVLAGSINKEIVALINQTGEWAIGLCGKDGNMVFAEKARKTIKDPDSNIERVLDLGFVGEVVEVDRTLLDLLARSEMIPVIAPVAPGRDGATYNINADTFAGAIAGALNATRLLFLTDVPGVLDKKGQLIKELSVAEAHALIADGTISGGMIPKVETCIDAIKAGVQGVVILNGKTAHSVLLEIFTEHGIGTLIVP.

Substrate contacts are provided by residues 66–67 (GG), R88, and N193.

This sequence belongs to the acetylglutamate kinase family. ArgB subfamily.

The protein resides in the cytoplasm. It catalyses the reaction N-acetyl-L-glutamate + ATP = N-acetyl-L-glutamyl 5-phosphate + ADP. It functions in the pathway amino-acid biosynthesis; L-arginine biosynthesis; N(2)-acetyl-L-ornithine from L-glutamate: step 2/4. In terms of biological role, catalyzes the ATP-dependent phosphorylation of N-acetyl-L-glutamate. The polypeptide is Acetylglutamate kinase (Rhizobium etli (strain ATCC 51251 / DSM 11541 / JCM 21823 / NBRC 15573 / CFN 42)).